The following is a 388-amino-acid chain: Putative pyridoxal phosphate-dependent aminotransferase EpsN (388 aa).

Lysine 190 is subject to N6-(pyridoxal phosphate)lysine.

Belongs to the DegT/DnrJ/EryC1 family. Pyridoxal 5'-phosphate serves as cofactor.

May be involved in the production of the exopolysaccharide (EPS) component of the extracellular matrix during biofilm formation. EPS is responsible for the adhesion of chains of cells into bundles. The chain is Putative pyridoxal phosphate-dependent aminotransferase EpsN (epsN) from Bacillus subtilis (strain 168).